A 482-amino-acid polypeptide reads, in one-letter code: tRNA sulfurtransferase (482 aa).

A THUMP domain is found at 61-165; the sequence is LAIRDALTRI…DDRLLLIKGR (105 aa). ATP contacts are provided by residues 183-184, K265, G287, and Q296; that span reads LI. A disulfide bridge connects residues C344 and C456. The Rhodanese domain maps to 404-482; sequence FGPNDVILDI…GFNNVKVYRP (79 aa). C456 serves as the catalytic Cysteine persulfide intermediate.

Belongs to the ThiI family.

It localises to the cytoplasm. The enzyme catalyses [ThiI sulfur-carrier protein]-S-sulfanyl-L-cysteine + a uridine in tRNA + 2 reduced [2Fe-2S]-[ferredoxin] + ATP + H(+) = [ThiI sulfur-carrier protein]-L-cysteine + a 4-thiouridine in tRNA + 2 oxidized [2Fe-2S]-[ferredoxin] + AMP + diphosphate. It carries out the reaction [ThiS sulfur-carrier protein]-C-terminal Gly-Gly-AMP + S-sulfanyl-L-cysteinyl-[cysteine desulfurase] + AH2 = [ThiS sulfur-carrier protein]-C-terminal-Gly-aminoethanethioate + L-cysteinyl-[cysteine desulfurase] + A + AMP + 2 H(+). It functions in the pathway cofactor biosynthesis; thiamine diphosphate biosynthesis. Functionally, catalyzes the ATP-dependent transfer of a sulfur to tRNA to produce 4-thiouridine in position 8 of tRNAs, which functions as a near-UV photosensor. Also catalyzes the transfer of sulfur to the sulfur carrier protein ThiS, forming ThiS-thiocarboxylate. This is a step in the synthesis of thiazole, in the thiamine biosynthesis pathway. The sulfur is donated as persulfide by IscS. The protein is tRNA sulfurtransferase of Shigella sonnei (strain Ss046).